The sequence spans 387 residues: Adaptive-response sensory kinase SasA (387 aa).

Residues 1-97 (MGESLSPQAL…TDQLANQLPQ (97 aa)) are interacts with KaiC. The Histidine kinase domain occupies 158–382 (LVAHDLRNPL…TFHFTMPVYR (225 aa)). Residue histidine 161 is modified to Phosphohistidine; by autocatalysis.

As to quaternary structure, homooligomerizes. Part of the circadian clock (KaiA, KaiB, KaiC, CikA, RpaA, SasA), the composition of which varies during the circadian cycle. Binds to the CI domain of KaiC; KaiB(fs) and SasA compete for the binding site. Binds preferentially to doubly phosphorylated KaiC. Interacts with LdpA. Autophosphorylates in vitro.

It catalyses the reaction ATP + protein L-histidine = ADP + protein N-phospho-L-histidine.. Its function is as follows. Member of the two-component regulatory system SasA/RpaA involved in genome-wide circadian gene expression. One of three clock output pathways. Participates in the KaiABC clock protein complex, which constitutes the main circadian regulator in cyanobacteria, via its interaction with KaiC. Required for robustness of the circadian rhythm of gene expression and involved in clock output. KaiC enhances the autophosphorylation activity of SasA, which then transfers its phosphate group to RpaA to activate it. Phosphotransfer is maximal when KaiC phosphorylation is active during the circadian cycle; this two-component system is activated by fully phosphorylated KaiC. A very robust clock is reconstituted with KaiA, KaiB, KaiC, SasA, CikA and RpaA; output is measured by transcription from an appropriate reporter. In addition to its output function, recruits fold-shifted KaiB (KaiB(fs)) to KaiC to cooperatively form the KaiB(6):KaiC(6) complex (independent of SasA kinase activity); at physiological concentrations increases their association. At higher concentrations SasA and KaiB(fs) compete to bind to KaiC. Mutations that decrease cooperativity nearly phenocopy a deletion mutation. Functionally, autophosphorylation and phosphotransfer activities are not essential for clock rhythms in continuous light, but they are essential for adaptation to light/dark cycles. The protein is Adaptive-response sensory kinase SasA of Synechococcus elongatus (strain ATCC 33912 / PCC 7942 / FACHB-805) (Anacystis nidulans R2).